Reading from the N-terminus, the 135-residue chain is Interleukin-4 (135 aa).

Residues 1–24 form the signal peptide; sequence MGLTSQLIPVLVCLLVCTSHFVHG. 3 cysteine pairs are disulfide-bonded: Cys27/Cys135, Cys48/Cys85, and Cys70/Cys105. N-linked (GlcNAc...) asparagine glycosylation is present at Asn62.

The protein belongs to the IL-4/IL-13 family.

It localises to the secreted. In terms of biological role, participates in at least several B-cell activation processes as well as of other cell types. It is a costimulator of DNA-synthesis. It induces the expression of class II MHC molecules on resting B-cells. It enhances both secretion and cell surface expression of IgE and IgG1. It also regulates the expression of the low affinity Fc receptor for IgE (CD23) on both lymphocytes and monocytes. Positively regulates IL31RA expression in macrophages. Stimulates autophagy in dendritic cells by interfering with mTORC1 signaling and through the induction of RUFY4. The chain is Interleukin-4 (IL4) from Bos taurus (Bovine).